A 110-amino-acid chain; its full sequence is Competence pilus inhibition repressor (110 aa).

One can recognise an HTH cro/C1-type domain in the interval 7–61 (VRFLRKRQGWTQQQLADFSHTSKSNISNLENGNQGYSPAILEYLAKAFNCSVSQI). A DNA-binding region (H-T-H motif) is located at residues 18-37 (QQQLADFSHTSKSNISNLEN).

Functionally, represses transcription of the PilB-specific inhibitory protein CpiA. The polypeptide is Competence pilus inhibition repressor (Acinetobacter baylyi (strain ATCC 33305 / BD413 / ADP1)).